Consider the following 300-residue polypeptide: Folate-binding protein 1 (300 aa).

The N-terminal stretch at 1–28 (MGRCLTKKVFLIQSPILFLHLLISLSSG) is a signal peptide. Intrachain disulfides connect Cys-38-Cys-76, Cys-68-Cys-111, Cys-77-Cys-114, Cys-102-Cys-139, and Cys-132-Cys-178. A glycan (N-linked (GlcNAc...) asparagine) is linked at Asn-173. The helical transmembrane segment at 238 to 258 (MTTIQKISLGMSFLIAGMFLI) threads the bilayer.

The protein belongs to the folate receptor family. In terms of tissue distribution, expressed in leaves.

The protein localises to the membrane. Its function is as follows. Folic acid-binding protein involved in salicylic acid- (SA-) induced folate accumulation by triggering uptake and accumulation of folic acid in cells. May be implicated in the transport of the folates from the site of production (leaves) to the site of storage (fruits and seeds) and utilization (roots). The polypeptide is Folate-binding protein 1 (Arabidopsis thaliana (Mouse-ear cress)).